The chain runs to 323 residues: Aquaporin-4 (323 aa).

Residues 1–36 (MSDRPTARRWGKCGPLCTRENIMVAFKGVWTQAFWK) lie on the Cytoplasmic side of the membrane. Residues cysteine 13 and cysteine 17 are each lipidated (S-palmitoyl cysteine). The helical transmembrane segment at 37–57 (AVTAEFLAMLIFVLLSLGSTI) threads the bilayer. Over 58–69 (NWGGTEKPLPVD) the chain is Extracellular. The chain crosses the membrane as a helical span at residues 70-89 (MVLISLCFGLSIATMVQCFG). At 90–93 (HISG) the chain is on the cytoplasmic side. Positions 94–101 (GHINPAVT) form an intramembrane region, discontinuously helical. An NPA 1 motif is present at residues 97–99 (NPA). Residues 102–115 (VAMVCTRKISIAKS) are Cytoplasmic-facing. Serine 111 is subject to Phosphoserine; by PKG. The chain crosses the membrane as a helical span at residues 116–136 (VFYIAAQCLGAIIGAGILYLV). Residues 137–155 (TPPSVVGGLGVTMVHGNLT) lie on the Extracellular side of the membrane. Asparagine 153 carries an N-linked (GlcNAc...) asparagine glycan. Residues 156 to 176 (AGHGLLVELIITFQLVFTIFA) traverse the membrane as a helical segment. Residues 177 to 184 (SCDSKRTD) lie on the Cytoplasmic side of the membrane. Phosphoserine; by PKC is present on serine 180. A helical membrane pass occupies residues 185–205 (VTGSIALAIGFSVAIGHLFAI). An N-linked (GlcNAc...) asparagine glycan is attached at asparagine 206. Residues 206–208 (NYT) lie on the Extracellular side of the membrane. The discontinuously helical intramembrane region spans 209-222 (GASMNPARSFGPAV). The short motif at 213-215 (NPA) is the NPA 2 element. Topologically, residues 223–231 (IMGNWENHW) are extracellular. A helical transmembrane segment spans residues 232–252 (IYWVGPIIGAVLAGGLYEYVF). At 253–323 (CPDVEFKRRF…DQSGEVLSSV (71 aa)) the chain is on the cytoplasmic side. Serine 276 and serine 285 each carry phosphoserine. At threonine 289 the chain carries Phosphothreonine. The residue at position 321 (serine 321) is a Phosphoserine.

Belongs to the MIP/aquaporin (TC 1.A.8) family. As to quaternary structure, homotetramer. The tetramers can form oligomeric arrays in membranes. The size of the oligomers differs between tissues and is smaller in skeletal muscle than in brain. Interaction between AQP4 oligomeric arrays in close-by cells can contribute to cell-cell adhesion. Part of a complex containing MLC1, TRPV4, HEPACAM and ATP1B1. In terms of processing, phosphorylation by PKC at Ser-180 reduces conductance by 50%. Phosphorylation by PKG at Ser-111 in response to glutamate increases conductance by 40%. Post-translationally, isoform 2: Palmitoylated on its N-terminal region. Isoform 1: Not palmitoylated. Detected in skeletal muscle. Detected in stomach, along the glandular base region of the fundic gland (at protein level). Detected in brain, lung and skeletal muscle, and at much lower levels in heart and ovary.

The protein localises to the cell membrane. Its subcellular location is the basolateral cell membrane. The protein resides in the endosome membrane. It localises to the sarcolemma. It is found in the cell projection. It carries out the reaction H2O(in) = H2O(out). In terms of biological role, forms a water-specific channel. Plays an important role in brain water homeostasis. It is involved in glymphatic solute transport and is required for a normal rate of water exchange across the blood brain interface. Required for normal levels of cerebrospinal fluid influx into the brain cortex and parenchyma along paravascular spaces that surround penetrating arteries, and for normal drainage of interstitial fluid along paravenous drainage pathways. Thereby, it is required for normal clearance of solutes from the brain interstitial fluid, including soluble beta-amyloid peptides derived from APP. Plays a redundant role in urinary water homeostasis and urinary concentrating ability. The protein is Aquaporin-4 (AQP4) of Homo sapiens (Human).